A 72-amino-acid polypeptide reads, in one-letter code: Large ribosomal subunit protein bL28 (72 aa).

It belongs to the bacterial ribosomal protein bL28 family.

This is Large ribosomal subunit protein bL28 from Chlorobaculum tepidum (strain ATCC 49652 / DSM 12025 / NBRC 103806 / TLS) (Chlorobium tepidum).